The primary structure comprises 71 residues: Small ribosomal subunit protein bS21 (71 aa).

Positions 34 to 44 (RREHYEKPTSE) are enriched in basic and acidic residues. Residues 34–71 (RREHYEKPTSERKRKKAAAVKRHAKKLSRDNARRTRLY) are disordered. Basic residues predominate over residues 45–59 (RKRKKAAAVKRHAKK). The segment covering 60–71 (LSRDNARRTRLY) has biased composition (basic and acidic residues).

Belongs to the bacterial ribosomal protein bS21 family.

This chain is Small ribosomal subunit protein bS21, found in Idiomarina loihiensis (strain ATCC BAA-735 / DSM 15497 / L2-TR).